Consider the following 343-residue polypeptide: Annexin A1 isoform p37 (343 aa).

An Isoglutamyl lysine isopeptide (Gln-Lys) (interchain with K-?) cross-link involves residue Gln-19. At Tyr-21 the chain carries Phosphotyrosine; by EGFR; in vitro. Ser-24 bears the Phosphoserine; by PKC; in vitro mark. 4 Annexin repeats span residues 38–109 (FDPS…ALLK), 110–181 (TPAQ…VLAK), 193–265 (DLAD…ALVK), and 269–340 (SKPA…ALCG).

Belongs to the annexin family. Post-translationally, phosphorylated by protein kinase C and epidermal growth factor receptor/kinase. In terms of processing, the N-terminus is blocked.

The protein localises to the nucleus. It is found in the cytoplasm. The protein resides in the cell projection. It localises to the cilium. Its subcellular location is the basolateral cell membrane. Its function is as follows. Calcium/phospholipid-binding protein which promotes membrane fusion and is involved in exocytosis. This protein regulates phospholipase A2 activity. It seems to bind from two to four calcium ions with high affinity. The polypeptide is Annexin A1 isoform p37 (CP37) (Columba livia (Rock dove)).